The following is a 398-amino-acid chain: Elongation factor Tu (398 aa).

The 198-residue stretch at 10–207 (KPHVNIGTIG…TVDSYIPEPE (198 aa)) folds into the tr-type G domain. Residues 19–26 (GHVDHGKT) form a G1 region. 19-26 (GHVDHGKT) lines the GTP pocket. A Mg(2+)-binding site is contributed by Thr26. The G2 stretch occupies residues 63–67 (GITIN). A G3 region spans residues 84 to 87 (DAPG). GTP contacts are provided by residues 84 to 88 (DAPGH) and 139 to 142 (NKVD). The segment at 139–142 (NKVD) is G4. The interval 177–179 (SAL) is G5.

This sequence belongs to the TRAFAC class translation factor GTPase superfamily. Classic translation factor GTPase family. EF-Tu/EF-1A subfamily. As to quaternary structure, monomer.

The protein localises to the cytoplasm. The catalysed reaction is GTP + H2O = GDP + phosphate + H(+). GTP hydrolase that promotes the GTP-dependent binding of aminoacyl-tRNA to the A-site of ribosomes during protein biosynthesis. The chain is Elongation factor Tu from Streptococcus pyogenes serotype M28 (strain MGAS6180).